The primary structure comprises 339 residues: tRNA N6-adenosine threonylcarbamoyltransferase (339 aa).

Residues His-114 and His-118 each coordinate Fe cation. Substrate contacts are provided by residues 137 to 141, Asp-170, Gly-183, Asp-187, and Asn-277; that span reads VVSGG. Asp-305 lines the Fe cation pocket.

This sequence belongs to the KAE1 / TsaD family. It depends on Fe(2+) as a cofactor.

The protein localises to the cytoplasm. The enzyme catalyses L-threonylcarbamoyladenylate + adenosine(37) in tRNA = N(6)-L-threonylcarbamoyladenosine(37) in tRNA + AMP + H(+). Required for the formation of a threonylcarbamoyl group on adenosine at position 37 (t(6)A37) in tRNAs that read codons beginning with adenine. Is involved in the transfer of the threonylcarbamoyl moiety of threonylcarbamoyl-AMP (TC-AMP) to the N6 group of A37, together with TsaE and TsaB. TsaD likely plays a direct catalytic role in this reaction. In Clostridium beijerinckii (strain ATCC 51743 / NCIMB 8052) (Clostridium acetobutylicum), this protein is tRNA N6-adenosine threonylcarbamoyltransferase.